A 103-amino-acid polypeptide reads, in one-letter code: Alkanal monooxygenase alpha chain (103 aa).

Heterodimer of an alpha and a beta chain.

The catalysed reaction is a long-chain fatty aldehyde + FMNH2 + O2 = a long-chain fatty acid + hnu + FMN + H2O + 2 H(+). Functionally, light-emitting reaction in luminous bacteria. The chain is Alkanal monooxygenase alpha chain (luxA) from Vibrio cholerae.